The following is a 61-amino-acid chain: UPF0434 protein TM1040_0056 (61 aa).

It belongs to the UPF0434 family.

The polypeptide is UPF0434 protein TM1040_0056 (Ruegeria sp. (strain TM1040) (Silicibacter sp.)).